We begin with the raw amino-acid sequence, 184 residues long: Adenine phosphoribosyltransferase (184 aa).

It belongs to the purine/pyrimidine phosphoribosyltransferase family. Homodimer.

It localises to the cytoplasm. The enzyme catalyses AMP + diphosphate = 5-phospho-alpha-D-ribose 1-diphosphate + adenine. It participates in purine metabolism; AMP biosynthesis via salvage pathway; AMP from adenine: step 1/1. Its function is as follows. Catalyzes a salvage reaction resulting in the formation of AMP, that is energically less costly than de novo synthesis. The protein is Adenine phosphoribosyltransferase of Corynebacterium diphtheriae (strain ATCC 700971 / NCTC 13129 / Biotype gravis).